The chain runs to 524 residues: Maturase K (524 aa).

The protein belongs to the intron maturase 2 family. MatK subfamily.

The protein resides in the plastid. It localises to the chloroplast. Functionally, usually encoded in the trnK tRNA gene intron. Probably assists in splicing its own and other chloroplast group II introns. The protein is Maturase K of Welwitschia mirabilis (Tree tumbo).